We begin with the raw amino-acid sequence, 394 residues long: Probable peptidoglycan glycosyltransferase FtsW (394 aa).

The Cytoplasmic portion of the chain corresponds to 1-26; sequence MNTMRPRHLNQRGKPVSRPISLYDKW. Residues 27 to 47 traverse the membrane as a helical segment; sequence LIGAVFGLLIIGLMMVASSSV. Residues 48–57 are Periplasmic-facing; it reads MISTKYFHQP. Residues 58–78 traverse the membrane as a helical segment; it reads FHFLIRQACYLFVGLLLALIV. The Cytoplasmic portion of the chain corresponds to 79–88; that stretch reads VRTDSSFWEK. Residues 89-109 form a helical membrane-spanning segment; it reads ISMPMMIGCVFLLLIVLIPGI. Over 110–118 the chain is Periplasmic; that stretch reads GKSVNGSRR. The chain crosses the membrane as a helical span at residues 119–139; it reads WLALGPIGVQVSELTKLAMIF. Residues 140-154 lie on the Cytoplasmic side of the membrane; it reads YLSGYLVRQQEAVCE. Residues 155–175 form a helical membrane-spanning segment; it reads SIFGFIKPMAILAVVSVLLLL. The Periplasmic segment spans residues 176-177; the sequence is EP. Residues 178-198 form a helical membrane-spanning segment; sequence DFGATVVISGTVMAMLFLAGV. At 199-201 the chain is on the cytoplasmic side; it reads KLR. The helical transmembrane segment at 202–222 threads the bilayer; sequence YYFGLMLVVVTALALLAVSSP. At 223–278 the chain is on the periplasmic side; that stretch reads YRVARLTAFLDPWADQYNSGYQLTQSLIAFGRGGWFGTGLGESIQKLLYLPEAHTD. A helical transmembrane segment spans residues 279 to 299; that stretch reads FLFAVIAEELGLFGILVVITL. At 300–327 the chain is on the cytoplasmic side; that stretch reads YSILVIRGLNIGYTAYTQERHFASYTAY. The chain crosses the membrane as a helical span at residues 328–348; sequence GLTIWLALQASINMGVNAGLL. Residues 349 to 354 lie on the Periplasmic side of the membrane; the sequence is PTKGLT. Residues 355-375 traverse the membrane as a helical segment; that stretch reads LPLLSYGGASMVINCIVIALL. Residues 376 to 394 are Cytoplasmic-facing; that stretch reads LRIDHENRWQSLGLRPLTA.

This sequence belongs to the SEDS family. FtsW subfamily.

It is found in the cell inner membrane. It catalyses the reaction [GlcNAc-(1-&gt;4)-Mur2Ac(oyl-L-Ala-gamma-D-Glu-L-Lys-D-Ala-D-Ala)](n)-di-trans,octa-cis-undecaprenyl diphosphate + beta-D-GlcNAc-(1-&gt;4)-Mur2Ac(oyl-L-Ala-gamma-D-Glu-L-Lys-D-Ala-D-Ala)-di-trans,octa-cis-undecaprenyl diphosphate = [GlcNAc-(1-&gt;4)-Mur2Ac(oyl-L-Ala-gamma-D-Glu-L-Lys-D-Ala-D-Ala)](n+1)-di-trans,octa-cis-undecaprenyl diphosphate + di-trans,octa-cis-undecaprenyl diphosphate + H(+). It functions in the pathway cell wall biogenesis; peptidoglycan biosynthesis. Functionally, peptidoglycan polymerase that is essential for cell division. The protein is Probable peptidoglycan glycosyltransferase FtsW of Legionella pneumophila subsp. pneumophila (strain Philadelphia 1 / ATCC 33152 / DSM 7513).